A 402-amino-acid polypeptide reads, in one-letter code: Calcium-responsive transactivator (402 aa).

Residues 1–148 (MSVAFASARP…TLPTTSMSMS (148 aa)) are N-terminal auto-inhibitory domain; necessary for interaction with SMARCA4/BRG1. The SH2-binding signature appears at 50-53 (YQQI). Disordered stretches follow at residues 72-129 (QSLL…GPNH), 141-170 (PTTS…SVPL), 195-250 (MHQQ…SSQQ), 262-290 (QYGH…YQPA), and 305-402 (TQHY…NYQQ). Positions 92-106 (QSGSAQGLHSQGSLS) are enriched in low complexity. Over residues 117–129 (SLMQAQIGNGPNH) the composition is skewed to polar residues. The tract at residues 149-237 (GSGHGSGPGY…GGGVMGQRPM (89 aa)) is methionine-rich intra-molecular domain. Residues 196–224 (HQQAASSHYSAAQGGSQHYQGQSMAMMGQ) are compositionally biased toward low complexity. Residues 251–323 (YLGQEEYYGG…SQYSQQQTGY (73 aa)) are MFD domain. Low complexity-rich tracts occupy residues 311 to 379 (GGNS…RASQ) and 390 to 402 (YGYE…NYQQ). The necessary for nuclear localization stretch occupies residues 340–402 (NQQSYPGQQQ…EQGQYGNYQQ (63 aa)). Residues 359–362 (SQYS) carry the SH2-binding motif. An SH3-binding motif is present at residues 377 to 385 (ASQTGPSTQ). The tract at residues 393–402 (EQGQYGNYQQ) is necessary for interaction with CREBBP and for the recruitment of CREBBP to the nuclear bodies. Positions 397–400 (YGNY) match the SH2-binding motif.

The protein belongs to the SS18 family. Homodimer. Dimerization may be necessary for its function in neuronal dendritic development. Interacts (via C-terminus) with CREBBP (via N-terminus), EP300 and SMARCA4/BRG1. Interacts with the nBAF complex. Association with CREBBP facilitates transcription while the association with SMARCA4/BRG1 suppresses CREST-mediated transcription in resting neurons.

It localises to the nucleus. It is found in the chromosome. The protein resides in the centromere. Its subcellular location is the kinetochore. Transcriptional activator which is required for calcium-dependent dendritic growth and branching in cortical neurons. Recruits CREB-binding protein (CREBBP) to nuclear bodies. Component of the CREST-BRG1 complex, a multiprotein complex that regulates promoter activation by orchestrating a calcium-dependent release of a repressor complex and a recruitment of an activator complex. In resting neurons, transcription of the c-FOS promoter is inhibited by BRG1-dependent recruitment of a phospho-RB1-HDAC1 repressor complex. Upon calcium influx, RB1 is dephosphorylated by calcineurin, which leads to release of the repressor complex. At the same time, there is increased recruitment of CREBBP to the promoter by a CREST-dependent mechanism, which leads to transcriptional activation. The CREST-BRG1 complex also binds to the NR2B promoter, and activity-dependent induction of NR2B expression involves a release of HDAC1 and recruitment of CREBBP. The sequence is that of Calcium-responsive transactivator (SS18L1) from Bos taurus (Bovine).